Reading from the N-terminus, the 276-residue chain is Putative ABC transporter ATP-binding protein MA_4021 (276 aa).

In terms of domain architecture, ABC transporter spans 5–247; that stretch reads FDLKNISYSY…DLNLLLSTNL (243 aa). 38 to 45 is an ATP binding site; it reads GSNGSGKS.

This sequence belongs to the ABC transporter superfamily.

Its subcellular location is the cell membrane. Probably part of an ABC transporter complex. Responsible for energy coupling to the transport system. The sequence is that of Putative ABC transporter ATP-binding protein MA_4021 from Methanosarcina acetivorans (strain ATCC 35395 / DSM 2834 / JCM 12185 / C2A).